Here is a 346-residue protein sequence, read N- to C-terminus: Serine/threonine-protein phosphatase PP1(4.8) (346 aa).

The segment at 46–65 is disordered; sequence QSAQTQESTPKTNGTGRATT. Residues Asp-102, His-104, Asp-130, and Asn-162 each contribute to the Mn(2+) site. Residue His-163 is the Proton donor of the active site. Mn(2+) is bound by residues His-211 and His-287.

It belongs to the PPP phosphatase family. PP-1 subfamily. Mn(2+) is required as a cofactor.

The enzyme catalyses O-phospho-L-seryl-[protein] + H2O = L-seryl-[protein] + phosphate. It carries out the reaction O-phospho-L-threonyl-[protein] + H2O = L-threonyl-[protein] + phosphate. This is Serine/threonine-protein phosphatase PP1(4.8) from Trypanosoma brucei brucei.